Reading from the N-terminus, the 834-residue chain is Mannosyl-oligosaccharide glucosidase (834 aa).

The span at 1 to 10 (MARGERRRRA) shows a compositional bias: basic residues. At 1 to 36 (MARGERRRRAAAAEGARPLERARGAGRRDGRAGGAR) the chain is on the cytoplasmic side. The tract at residues 1-37 (MARGERRRRAAAAEGARPLERARGAGRRDGRAGGARG) is disordered. The Endoplasmic reticulum targeting signature appears at 3-9 (RGERRRR). Positions 17-31 (RPLERARGAGRRDGR) are enriched in basic and acidic residues. The helical; Signal-anchor for type II membrane protein transmembrane segment at 37-57 (GSAGGAALAVVVLALAFGLSG) threads the bilayer. The Lumenal segment spans residues 58–834 (RWVLAWLGVR…LVLLIMAEEY (777 aa)). Positions 74–136 (PAPSALPPDS…GTPPKLRHTC (63 aa)) are required for endoplasmic reticulum targeting. The active-site Proton donor is the aspartate 580. Residue asparagine 654 is glycosylated (N-linked (GlcNAc...) asparagine). Catalysis depends on glutamate 804, which acts as the Proton acceptor.

The protein belongs to the glycosyl hydrolase 63 family.

The protein resides in the endoplasmic reticulum membrane. It carries out the reaction N(4)-(alpha-D-Glc-(1-&gt;2)-alpha-D-Glc-(1-&gt;3)-alpha-D-Glc-(1-&gt;3)-alpha-D-Man-(1-&gt;2)-alpha-D-Man-(1-&gt;2)-alpha-D-Man-(1-&gt;3)-[alpha-D-Man-(1-&gt;2)-alpha-D-Man-(1-&gt;3)-[alpha-D-Man-(1-&gt;2)-alpha-D-Man-(1-&gt;6)]-alpha-D-Man-(1-&gt;6)]-beta-D-Man-(1-&gt;4)-beta-D-GlcNAc-(1-&gt;4)-beta-D-GlcNAc)-L-asparaginyl-[protein] + H2O = N(4)-(alpha-D-Glc-(1-&gt;3)-alpha-D-Glc-(1-&gt;3)-alpha-D-Man-(1-&gt;2)-alpha-D-Man-(1-&gt;2)-alpha-D-Man-(1-&gt;3)-[alpha-D-Man-(1-&gt;2)-alpha-D-Man-(1-&gt;3)-[alpha-D-Man-(1-&gt;2)-alpha-D-Man-(1-&gt;6)]-alpha-D-Man-(1-&gt;6)]-beta-D-Man-(1-&gt;4)-beta-D-GlcNAc-(1-&gt;4)-beta-D-GlcNAc)-L-asparaginyl-[protein] + beta-D-glucose. The protein operates within glycan metabolism; N-glycan degradation. In the context of N-glycan degradation, cleaves the distal alpha 1,2-linked glucose residue from the Glc(3)Man(9)GlcNAc(2) oligosaccharide precursor in a highly specific manner. The chain is Mannosyl-oligosaccharide glucosidase from Rattus norvegicus (Rat).